Reading from the N-terminus, the 197-residue chain is ATP-dependent Clp protease proteolytic subunit 1 (197 aa).

Residue histidine 126 is part of the active site.

The protein belongs to the peptidase S14 family. In terms of assembly, fourteen ClpP subunits assemble into 2 heptameric rings which stack back to back to give a disk-like structure with a central cavity, resembling the structure of eukaryotic proteasomes.

It localises to the cytoplasm. It catalyses the reaction Hydrolysis of proteins to small peptides in the presence of ATP and magnesium. alpha-casein is the usual test substrate. In the absence of ATP, only oligopeptides shorter than five residues are hydrolyzed (such as succinyl-Leu-Tyr-|-NHMec, and Leu-Tyr-Leu-|-Tyr-Trp, in which cleavage of the -Tyr-|-Leu- and -Tyr-|-Trp bonds also occurs).. Functionally, cleaves peptides in various proteins in a process that requires ATP hydrolysis. Has a chymotrypsin-like activity. Plays a major role in the degradation of misfolded proteins. The chain is ATP-dependent Clp protease proteolytic subunit 1 from Nocardia farcinica (strain IFM 10152).